An 81-amino-acid chain; its full sequence is Lantipeptide prochlorosin 1.1 (81 aa).

The propeptide occupies 1 to 65; the sequence is MSEEQLKAFI…DDDLEGVAGG (65 aa). Positions 68-72 form a cross-link, beta-methyllanthionine (Cys-Thr); that stretch reads CVQGT. Residues 77 to 81 constitute a cross-link (beta-methyllanthionine (Thr-Cys)); sequence TINVC.

Cross-links are proved in vitro, when coepressed in E.coli with the ProcM lanthionine synthetase. Post-translationally, the beta-methyllanthionine residues have a DL configuration (with 2S,3S,6R stereochemistry). In terms of processing, maturation of prochlorosin involves the enzymatic conversion of Thr, and Ser into dehydrated AA and the formation of thioether bonds with cysteines. This is followed by membrane translocation and cleavage of the modified precursor.

The protein resides in the secreted. Its function is as follows. Lanthionine-containing peptide (lantipeptide) with unknown function. Does not show antibiotic activity against Lactococcus lactis 117 and Bacillus subtilis 6633 bacteria. Organisms that produce this peptide live in oligotrophic environments at very dilute concentrations, suggesting this peptide is not secreted to influence other bacteria. This Prochlorococcus marinus (strain MIT 9313) protein is Lantipeptide prochlorosin 1.1.